The sequence spans 309 residues: MKMATNGRFFTIGLVASWYSSNIGVLLLNKYLLSNYGFKYPIFLTMCHMTACSLLSYVAIAWLKMVPMQTIRSRVQFFKIAALSLVFCVSVVFGNISLRFLPVSFNQAIGATTPFFTAVFAYLMTRKKEAWLTYFTLVPVVTGVVIASGGEPSFHLFGFLMCIAATAARALKSVLQGILLSSEGEKLNSMNLLLYMAPIAVVLLLPATLIMEKNVVGITIALARDDFRIVWYLLFNSALAYLVNLTNFLVTNHTSALTLQVLGNAKGAVAVVVSILIFKNPVSVTGMLGYSLTVCGVILYSEAKKRNKN.

The next 10 membrane-spanning stretches (helical) occupy residues 9–29 (FFTI…LLLN), 42–62 (IFLT…AIAW), 77–97 (FFKI…GNIS), 100–120 (FLPV…TAVF), 130–150 (AWLT…ASGG), 154–174 (FHLF…LKSV), 192–212 (LLLY…LIME), 229–249 (IVWY…TNFL), 256–278 (ALTL…ILIF), and 282–301 (VSVT…ILYS). Residues 30–147 (KYLLSNYGFK…VPVVTGVVIA (118 aa)) form the EamA domain.

The protein belongs to the TPT transporter family. TPT (TC 2.A.7.9) subfamily.

The protein resides in the membrane. The polypeptide is Probable sugar phosphate/phosphate translocator At5g05820 (Arabidopsis thaliana (Mouse-ear cress)).